We begin with the raw amino-acid sequence, 183 residues long: UPF0200 protein MmarC7_0527 (183 aa).

8–15 (GMPGSGKS) contacts ATP.

This sequence belongs to the UPF0200 family.

This Methanococcus maripaludis (strain C7 / ATCC BAA-1331) protein is UPF0200 protein MmarC7_0527.